Consider the following 513-residue polypeptide: Zinc finger CCCH-type with G patch domain-containing protein (513 aa).

The C3H1-type zinc finger occupies 155-178 (PCSYYLEGECRFDETKCRFSHGAL). A compositionally biased stretch (acidic residues) spans 252 to 261 (DQEEDDELSS). The disordered stretch occupies residues 252-282 (DQEEDDELSSEESNSSMNNESSDEAESDMDD). A compositionally biased stretch (low complexity) spans 262 to 271 (EESNSSMNNE). Residues 272–282 (SSDEAESDMDD) show a composition bias toward acidic residues. Positions 312-358 (TRGIGSKLMEKMGYIHGTGLGSDGRGIVTPVSAQILPQGRSLDACME) constitute a G-patch domain. The span at 478–495 (VQMQSHKQELATLQAQER) shows a compositional bias: polar residues. Positions 478 to 513 (VQMQSHKQELATLQAQERSLSKEQQTRKSKNKMFEF) are disordered. The segment covering 496–513 (SLSKEQQTRKSKNKMFEF) has biased composition (basic and acidic residues).

The protein resides in the nucleus. Transcription repressor. This is Zinc finger CCCH-type with G patch domain-containing protein from Drosophila erecta (Fruit fly).